A 612-amino-acid polypeptide reads, in one-letter code: Glutamine--fructose-6-phosphate aminotransferase [isomerizing] (612 aa).

Cysteine 2 functions as the Nucleophile; for GATase activity in the catalytic mechanism. Residues 2 to 219 (CGIVGANSTR…EGDIAIISKD (218 aa)) enclose the Glutamine amidotransferase type-2 domain. 2 consecutive SIS domains span residues 287 to 427 (AKEL…LKNS) and 460 to 602 (ISEY…VDQP). Lysine 607 acts as the For Fru-6P isomerization activity in catalysis.

In terms of assembly, homodimer.

The protein localises to the cytoplasm. It carries out the reaction D-fructose 6-phosphate + L-glutamine = D-glucosamine 6-phosphate + L-glutamate. Catalyzes the first step in hexosamine metabolism, converting fructose-6P into glucosamine-6P using glutamine as a nitrogen source. The polypeptide is Glutamine--fructose-6-phosphate aminotransferase [isomerizing] (Francisella tularensis subsp. tularensis (strain SCHU S4 / Schu 4)).